We begin with the raw amino-acid sequence, 508 residues long: Photosystem II CP47 reaction center protein (508 aa).

Helical transmembrane passes span 21–36 (SVHI…WAGS), 101–115 (IVFS…IWHW), 140–156 (GIHL…FGAF), 203–218 (IAAG…FHLS), 237–252 (VLSS…AFVV), and 457–472 (SFAL…HGAR).

This sequence belongs to the PsbB/PsbC family. PsbB subfamily. In terms of assembly, PSII is composed of 1 copy each of membrane proteins PsbA, PsbB, PsbC, PsbD, PsbE, PsbF, PsbH, PsbI, PsbJ, PsbK, PsbL, PsbM, PsbT, PsbX, PsbY, PsbZ, Psb30/Ycf12, at least 3 peripheral proteins of the oxygen-evolving complex and a large number of cofactors. It forms dimeric complexes. The cofactor is Binds multiple chlorophylls. PSII binds additional chlorophylls, carotenoids and specific lipids..

Its subcellular location is the plastid. It is found in the chloroplast thylakoid membrane. In terms of biological role, one of the components of the core complex of photosystem II (PSII). It binds chlorophyll and helps catalyze the primary light-induced photochemical processes of PSII. PSII is a light-driven water:plastoquinone oxidoreductase, using light energy to abstract electrons from H(2)O, generating O(2) and a proton gradient subsequently used for ATP formation. This is Photosystem II CP47 reaction center protein from Gossypium barbadense (Sea Island cotton).